A 554-amino-acid polypeptide reads, in one-letter code: Flavin-dependent halogenase ascD (554 aa).

Residues Gly15, Gly18, and Glu48 each contribute to the FAD site. The chloride site is built by Ser331 and Gly332. Residue Val333 coordinates FAD.

Belongs to the flavin-dependent halogenase family.

The enzyme catalyses ilicicolin B + FADH2 + chloride + O2 = ilicicolin A + FAD + 2 H2O + H(+). Its pathway is secondary metabolite biosynthesis; terpenoid biosynthesis. Its function is as follows. Flavin-dependent halogenase; part of the asc-1 gene cluster that mediates the biosynthesis of both ascochlorin and ascofuranone, a strong inhibitor of cyanide-insensitive alternative oxidases and a promising drug candidate against African trypanosomiasis. The first step in the pathway is performed by the non-reducing polyketide synthase ascC that produces orsellinic acid by condensing acetyl-CoA with 3 malonyl-CoA units. Orsellinic acid is then prenylated by the prenyltransferase ascA to yield ilicicolinic acid B. Ilicicolinic acid B is further reduced to ilicicolin B by the reductase ascB. The halogenase ascD then chlorinates ilicicolin B to produce ilicicolin A which is converted to ilicicolin A epoxide by the cytochrome P450 monooxygenase ascE that catalyzes stereoselective epoxidation of the terminal double bond of the prenyl group. Ilicicolin A epoxide is the last common precursor for the biosynthesis of ascofuranone and ascochlorin. The terpene cyclase ascF produces a monocyclic terpene, and the cyclization reaction is proposed to be initiated by protonation of the terminal epoxide of ilicicolin A epoxide to generate a monocyclic tertiarycation, which is followed by a series of hydride and methyl shifts with abstraction of proton, leading to the formation of the (14S,15R,19R)-trimethylcyclohexanone ring structure of ilicicolin C, which is finally reduced to ascochlorin by the dehydrogenase ascG. On the other hand, ilicicolin A epoxide is hydroxylated by the cytochrome P450 monooxygenase ascH, and the resultant product is cyclized by the terpene cyclase ascI to ascofuranol via protonation-initiated epoxide ring opening, which facilitates the 6-endo-tet cyclization to form the tetrahy-drofuran ring. Finally, ascofuranol is oxidized into ascofuranone by ascJ. This is Flavin-dependent halogenase ascD from Acremonium egyptiacum (Oospora egyptiaca).